We begin with the raw amino-acid sequence, 208 residues long: FMN-dependent NADH:quinone oxidoreductase (208 aa).

FMN-binding positions include 17–19, 99–102, and 143–146; these read SNS, MWNL, and SRGG.

Belongs to the azoreductase type 1 family. Homodimer. Requires FMN as cofactor.

The catalysed reaction is 2 a quinone + NADH + H(+) = 2 a 1,4-benzosemiquinone + NAD(+). It carries out the reaction N,N-dimethyl-1,4-phenylenediamine + anthranilate + 2 NAD(+) = 2-(4-dimethylaminophenyl)diazenylbenzoate + 2 NADH + 2 H(+). Functionally, quinone reductase that provides resistance to thiol-specific stress caused by electrophilic quinones. In terms of biological role, also exhibits azoreductase activity. Catalyzes the reductive cleavage of the azo bond in aromatic azo compounds to the corresponding amines. This is FMN-dependent NADH:quinone oxidoreductase from Staphylococcus aureus (strain MSSA476).